The chain runs to 575 residues: Major outer membrane protein MspA (575 aa).

The signal sequence occupies residues 1–19 (MKKALVFFVALAMIGSVFA).

It is found in the cell outer membrane. Its function is as follows. Major component of the outer membrane sheath. The polypeptide is Major outer membrane protein MspA (mspA) (Treponema maltophilum).